Here is a 142-residue protein sequence, read N- to C-terminus: Protein archease (142 aa).

Ca(2+) contacts are provided by D12, D141, and L142.

The protein belongs to the archease family.

Functionally, activates the tRNA-splicing ligase complex by facilitating the enzymatic turnover of catalytic subunit RtcB. Acts by promoting the guanylylation of RtcB, a key intermediate step in tRNA ligation. Can also alter the NTP specificity of RtcB such that ATP, dGTP or ITP is used efficiently. The chain is Protein archease from Thermococcus gammatolerans (strain DSM 15229 / JCM 11827 / EJ3).